An 832-amino-acid polypeptide reads, in one-letter code: AP-1 complex subunit gamma-1 (832 aa).

The GAE domain occupies 733–832 (LNVYASLLSA…QFDHKFDETL (100 aa)).

In terms of assembly, adapter protein complex 1 (AP-1) is a heterotetramer composed of two large adaptins (gamma-type subunit APL4 and beta-type subunit APL2), a medium adaptin (mu-type subunit APM1) and a small adaptin (sigma-type subunit APS1). AP-1 interacts with clathrin. Also a component of the AP-1R complex composed of at least APM2, APL4 and APS1.

It is found in the cytoplasm. The protein localises to the golgi apparatus membrane. Its subcellular location is the cytoplasmic vesicle. It localises to the clathrin-coated vesicle membrane. Its function is as follows. Adaptins are components of the adapter complexes which link clathrin to receptors in coated vesicles. Clathrin-associated protein complexes are believed to interact with the cytoplasmic tails of membrane proteins, leading to their selection and concentration. The AP-1 complex interacts directly with clathrin. Component of the AP-1-related (AP-1R) complex, an adapter protein complex that mediates sorting of cargo SNARE SNC1. In contrast to the APM1-containing AP-1 complex, AP-1R is incapable of sorting CHS3. This chain is AP-1 complex subunit gamma-1 (APL4), found in Saccharomyces cerevisiae (strain ATCC 204508 / S288c) (Baker's yeast).